The primary structure comprises 192 residues: Phosphoheptose isomerase (192 aa).

The 158-residue stretch at 35–192 (LIETLENQGK…CIERHFAHKN (158 aa)) folds into the SIS domain. 50 to 52 (NGG) is a binding site for substrate. Residues histidine 59 and glutamate 63 each coordinate Zn(2+). Substrate is bound by residues glutamate 63, 92–93 (ND), 118–120 (STS), serine 123, and glutamine 170. Glutamine 170 and histidine 178 together coordinate Zn(2+).

The protein belongs to the SIS family. GmhA subfamily. Homotetramer. Zn(2+) is required as a cofactor.

It is found in the cytoplasm. The enzyme catalyses 2 D-sedoheptulose 7-phosphate = D-glycero-alpha-D-manno-heptose 7-phosphate + D-glycero-beta-D-manno-heptose 7-phosphate. Its pathway is carbohydrate biosynthesis; D-glycero-D-manno-heptose 7-phosphate biosynthesis; D-glycero-alpha-D-manno-heptose 7-phosphate and D-glycero-beta-D-manno-heptose 7-phosphate from sedoheptulose 7-phosphate: step 1/1. Its function is as follows. Catalyzes the isomerization of sedoheptulose 7-phosphate in D-glycero-D-manno-heptose 7-phosphate. The protein is Phosphoheptose isomerase of Helicobacter pylori (strain P12).